A 536-amino-acid chain; its full sequence is Cytoplasmic dynein 2 intermediate chain 2 (536 aa).

The residue at position 15 (Ser15) is a Phosphoserine. Residues 80–93 (RNHVDAQVQTEAPV) are DYNLL2 binding. The tract at residues 106–131 (PRLAAFLRRVEAMVIRELNKNWQSHA) is DYNLRB1 binding. 5 WD repeats span residues 215–255 (EVPS…DPLL), 264–308 (THTD…QLQL), 390–430 (PHGG…PLTS), 433–473 (LSLK…QKPT), and 480–520 (QDES…TEQG).

Belongs to the dynein light intermediate chain family. As to quaternary structure, the cytoplasmic dynein 2 complex consists of two catalytic heavy chains (HCs) and a number of non-catalytic subunits presented by intermediate chains (ICs), light intermediate chains (LICs) and light chains (LCs). Among them, a heavy chain (DYNC2H1), two intermediate chains (DYNC2I2 and DYNC2I1), a light intermediate chain (DYNC2LI1), and a light chain (DYNLT2B) are unique to the cytoplasmic dynein complex 2, but a subset of the light chains are also shared by dynein-1 and dynein-2 complexes. Interacts with DYNC2I1; their C-terminal domains each bind a copy of the heavy chain, and their extended N-terminal regions are held together by an array of light chain dimers. Interacts with DYNLL2; this interaction is essential for dynein-2-mediated retrograde trafficking of ciliary proteins. Interacts with DYNLRB1; this interaction is essential for dynein-2-mediated retrograde trafficking of ciliary proteins. Interacts (via the WD domains) with MAP3K7 and TAB3. Interacts (via WD domains) with TAB2 (via C-terminus). Interacts (via WD domains) with TRAF6 (via TRAF-type domains). As to expression, expressed in several cell lines (at protein level).

The protein resides in the cytoplasm. It localises to the cytoskeleton. Its subcellular location is the cilium basal body. The protein localises to the cilium axoneme. It is found in the microtubule organizing center. The protein resides in the centrosome. It localises to the cell projection. Its subcellular location is the cilium. The protein localises to the filopodium. Acts as one of several non-catalytic accessory components of the cytoplasmic dynein 2 complex (dynein-2 complex), a motor protein complex that drives the movement of cargos along microtubules within cilia and flagella in concert with the intraflagellar transport (IFT) system. DYNC2I2 plays a major role in retrograde ciliary protein trafficking and in ciliogenesis. Required also to maintain a functional transition zone. Functionally, acts as a negative regulator of the Toll-like and IL-1R receptor signaling pathways. Inhibits the MAP3K7-induced NF-kappa-B activation pathway. Inhibits MAP3K7 phosphorylation at 'Thr-184' and 'Thr-187' upon Il-1 beta stimulation. The protein is Cytoplasmic dynein 2 intermediate chain 2 of Homo sapiens (Human).